A 590-amino-acid polypeptide reads, in one-letter code: Interferon alpha/beta receptor 1 (590 aa).

A signal peptide spans 1–26 (MLAVVGAAALVLVAGAPWVLPSAAGG). Over 27-429 (ENLKPPENID…EKTRPGSFST (403 aa)) the chain is Extracellular. Fibronectin type-III domains are found at residues 31 to 125 (PPEN…PFYT), 127 to 226 (HMSP…TTVA), 230 to 327 (PVPG…FIDS), and 332 to 425 (LPPP…TRPG). Asparagine 43 is a glycosylation site (N-linked (GlcNAc...) asparagine). Residues cysteine 78 and cysteine 86 are joined by a disulfide bond. Residues asparagine 109, asparagine 181, and asparagine 214 are each glycosylated (N-linked (GlcNAc...) asparagine). 2 disulfide bridges follow: cysteine 199/cysteine 220 and cysteine 284/cysteine 292. 4 N-linked (GlcNAc...) asparagine glycosylation sites follow: asparagine 314, asparagine 370, asparagine 409, and asparagine 413. Cysteines 397 and 419 form a disulfide. The helical transmembrane segment at 430–449 (IWIITGLGVVFFSVMVLYAL) threads the bilayer. Residues 450 to 590 (RSVWKYLCHV…ALRTEPALLC (141 aa)) lie on the Cytoplasmic side of the membrane. The important for interaction with TYK2 stretch occupies residues 483-492 (VLLTAEEHTE). A disordered region spans residues 514–545 (DLRKYSSQTSQDSGNYSNEEEESVGTESGQAV). A Glycyl lysine isopeptide (Lys-Gly) (interchain with G-Cter in ubiquitin) cross-link involves residue lysine 517. Residues 518 to 530 (YSSQTSQDSGNYS) show a composition bias toward polar residues. A Phosphoserine modification is found at serine 526.

This sequence belongs to the type II cytokine receptor family. In terms of assembly, heterodimer with IFNAR2; forming the receptor for type I interferon. Interacts with TYK2. Interacts with STAT1 and STAT2. Interacts (serine-phosphorylated form) with FBXW11, the substrate recognition component of a SCF (SKP1-CUL1-F-box protein) E3 ubiquitin-protein ligase complex. 3Interacts with SHMT2; this promotes interaction with ABRAXAS2 and the BRISC complex. Interacts with TRIM10; this interaction prevents association between IFNAR1 and TYK2. In terms of processing, ubiquitinated. This leads to its internalization and lysosomal degradation. The 'Lys-63'-linked ubiquitin chains are cleaved off by the BRISC complex; this prevents receptor internalization and degradation. Probable ubiquitination sites have been identified in human, but are poorly conserved across species. Phosphorylated on serine residues in response to interferon binding; this promotes interaction with FBXW11 and ubiquitination.

It is found in the cell membrane. The protein localises to the late endosome. It localises to the lysosome. In terms of biological role, together with IFNAR2, forms the heterodimeric receptor for type I interferons (including interferons alpha, beta, epsilon, omega and kappa). Type I interferon binding activates the JAK-STAT signaling cascade, and triggers tyrosine phosphorylation of a number of proteins including JAKs, TYK2, STAT proteins and the IFNR alpha- and beta-subunits themselves. STAT proteins are then phosphorylated by the JAKs, promoting their translocation into the nucleus to regulate expression of interferon-regulated genes. Can also act independently of IFNAR2: form an active IFNB1 receptor by itself and activate a signaling cascade that does not involve activation of the JAK-STAT pathway. The sequence is that of Interferon alpha/beta receptor 1 (Ifnar1) from Mus musculus (Mouse).